Here is a 389-residue protein sequence, read N- to C-terminus: MASQVGAINSVNALISRVFVQPKGDLADRLNSRVTVVILAVSSALLLSSHFIGDPITCWTPAQFNAQWVNFVNQYCFVHGTYFVPLDQQLAFEEEERTKVSIQYYQWVPYVFALQAFLFYIPRFIWKAMIAYSGYDLAAAVKYVDRFWSENRDKDDKFKTRLAAFEGRPSVYIWDGIRLARKKRSRNMALFYTLSTVWQAVNAWIQFYILTQLLDSSIYTLWGPSILGDLLQGNDWQTTGHFPRIVHCDFNRRRPASVQLDTVLCVLTLNIYYEKLFIFLWFWLVFVAVVSTVNCFKWIYYLCNKTKAQKTIKNYLSTAPIKSTISDDQFFSALGEDGLFIMDQMALNLGDIPASYLTISMRNICQDFIESEDYIDEERTPFVKSIKHT.

Transmembrane regions (helical) follow at residues 36–56 (VVIL…GDPI), 111–131 (VFAL…AMIA), 190–210 (LFYT…FYIL), and 276–296 (LFIF…VNCF).

It belongs to the pannexin family.

It localises to the cell membrane. The protein resides in the cell junction. Its subcellular location is the gap junction. Functionally, structural component of the gap junctions. The sequence is that of Innexin-6 (inx-6) from Caenorhabditis elegans.